The chain runs to 856 residues: Centrosomal protein of 97 kDa (856 aa).

LRR repeat units lie at residues 37 to 58, 59 to 80, 81 to 102, 103 to 124, 125 to 146, 147 to 168, 171 to 192, and 196 to 205; these read DVHT…EKCK, QLIQ…AKLT, QLRV…KDLV, HLEW…NSCT, ALQH…SKLI, SLKT…PAYL, NLSI…SFLA, and ELEQLSIMNN. The 39-residue stretch at 211 to 249 folds into the LRRCT domain; it reads TPSIPGFDYRPFIVSWCLNLRVLDGYVISQKESLKAEWL. The interval 300–742 is CCP110-binding; it reads HQRQLMSQSQ…KCVKDRDSEA (443 aa). A phosphoserine mark is found at Ser308 and Ser410. Residues 430 to 451 are disordered; it reads DDGADEFTKGLENQDEDKDKEK. A Phosphoserine modification is found at Ser497. Polar residues predominate over residues 498–513; the sequence is LTSLPESAGHSASRTE. Positions 498 to 525 are disordered; that stretch reads LTSLPESAGHSASRTEANSEEAMSPATS. Ser521 bears the Phosphoserine mark. Residue Thr534 is modified to Phosphothreonine. The IQ domain maps to 550-579; the sequence is LNAAATKLQACWRGFYTRNYNQQAKGVRYE. The tract at residues 579–853 is interaction with MPHOSPH9; that stretch reads EIRLRRMQEH…FQGLHVGVTV (275 aa). 2 disordered regions span residues 646–672 and 737–840; these read PPIS…DQSS and DRDS…PPEC. Residues 737–752 are compositionally biased toward basic and acidic residues; it reads DRDSEATAEEHSDCSR. Polar residues predominate over residues 753 to 773; sequence ESSASEQDNTLLQQYLTSVQQ. Ser755 bears the Phosphoserine mark. A compositionally biased stretch (acidic residues) spans 776–787; that stretch reads DAAEAADSDDVA. Basic and acidic residues predominate over residues 799 to 811; the sequence is ERFDASSDSETHR. Over residues 812–833 the composition is skewed to polar residues; the sequence is VASTSQDEISQTPENCQLNEEA.

In terms of assembly, interacts with CALM1, CEP76, KIF24 and TALPID3. Interacts with CCP110. ENKD1 competes with CEP97 for binding to CCP110, destabilizing the interaction between CP110 and CEP97 which promotes the removal of CCP110 and CEP97 from the mother centriole and allows the initiation of ciliogenesis. Via its interaction with CCP110, may indirectly interact with HERC2 and NEURL4. Interacts with MPHOSPH9.

Its subcellular location is the cytoplasm. It is found in the cytoskeleton. It localises to the microtubule organizing center. The protein resides in the centrosome. The protein localises to the centriole. In terms of biological role, acts as a key negative regulator of ciliogenesis in collaboration with CCP110 by capping the mother centriole thereby preventing cilia formation. Required for recruitment of CCP110 to the centrosome. The sequence is that of Centrosomal protein of 97 kDa (Cep97) from Mus musculus (Mouse).